We begin with the raw amino-acid sequence, 181 residues long: Mating-type M-specific polypeptide Mc (181 aa).

Residues T103–K171 constitute a DNA-binding region (HMG box).

The protein localises to the nucleus. Mating type proteins are sequence specific DNA-binding proteins that act as master switches in yeast differentiation by controlling gene expression in a cell type-specific fashion. Positive regulator of MFM genes. The HMG box recognizes the DNA sequence 5'-AACAAAG-3'. Required for conjugation and efficient meiosis. This chain is Mating-type M-specific polypeptide Mc (matMc), found in Schizosaccharomyces kambucha (Fission yeast).